The following is a 235-amino-acid chain: 5'-methylthioadenosine/S-adenosylhomocysteine nucleosidase (235 aa).

The active-site Proton acceptor is E12. Substrate is bound by residues G78, M153, and 174–175; that span reads ME. The Proton donor role is filled by D198.

It belongs to the PNP/UDP phosphorylase family. MtnN subfamily.

The enzyme catalyses S-adenosyl-L-homocysteine + H2O = S-(5-deoxy-D-ribos-5-yl)-L-homocysteine + adenine. The catalysed reaction is S-methyl-5'-thioadenosine + H2O = 5-(methylsulfanyl)-D-ribose + adenine. It catalyses the reaction 5'-deoxyadenosine + H2O = 5-deoxy-D-ribose + adenine. It functions in the pathway amino-acid biosynthesis; L-methionine biosynthesis via salvage pathway; S-methyl-5-thio-alpha-D-ribose 1-phosphate from S-methyl-5'-thioadenosine (hydrolase route): step 1/2. In terms of biological role, catalyzes the irreversible cleavage of the glycosidic bond in both 5'-methylthioadenosine (MTA) and S-adenosylhomocysteine (SAH/AdoHcy) to adenine and the corresponding thioribose, 5'-methylthioribose and S-ribosylhomocysteine, respectively. Also cleaves 5'-deoxyadenosine, a toxic by-product of radical S-adenosylmethionine (SAM) enzymes, into 5-deoxyribose and adenine. This chain is 5'-methylthioadenosine/S-adenosylhomocysteine nucleosidase, found in Geobacillus kaustophilus (strain HTA426).